Consider the following 459-residue polypeptide: UDP-N-acetylmuramate--L-alanine ligase (459 aa).

118-124 (GTHGKTT) provides a ligand contact to ATP.

Belongs to the MurCDEF family.

It localises to the cytoplasm. It carries out the reaction UDP-N-acetyl-alpha-D-muramate + L-alanine + ATP = UDP-N-acetyl-alpha-D-muramoyl-L-alanine + ADP + phosphate + H(+). It functions in the pathway cell wall biogenesis; peptidoglycan biosynthesis. In terms of biological role, cell wall formation. The polypeptide is UDP-N-acetylmuramate--L-alanine ligase (Agathobacter rectalis (strain ATCC 33656 / DSM 3377 / JCM 17463 / KCTC 5835 / VPI 0990) (Eubacterium rectale)).